The sequence spans 490 residues: GTPase Der (490 aa).

The 164-residue stretch at proline 3–aspartate 166 folds into the EngA-type G 1 domain. Residues glycine 9–serine 16, aspartate 56–isoleucine 60, and asparagine 118–aspartate 121 each bind GTP. A disordered region spans residues lysine 164 to serine 191. Residues aspartate 166–glycine 181 are compositionally biased toward acidic residues. The span at glutamate 182–serine 191 shows a compositional bias: basic and acidic residues. Positions isoleucine 196–valine 369 constitute an EngA-type G 2 domain. Residues glycine 202–serine 209, aspartate 249–valine 253, and asparagine 314–aspartate 317 each bind GTP. Residues threonine 370–glutamate 454 enclose the KH-like domain. A disordered region spans residues glycine 452–arginine 490. Basic residues predominate over residues asparagine 470 to arginine 490.

The protein belongs to the TRAFAC class TrmE-Era-EngA-EngB-Septin-like GTPase superfamily. EngA (Der) GTPase family. In terms of assembly, associates with the 50S ribosomal subunit.

Its function is as follows. GTPase that plays an essential role in the late steps of ribosome biogenesis. The protein is GTPase Der of Pseudomonas fluorescens (strain ATCC BAA-477 / NRRL B-23932 / Pf-5).